A 127-amino-acid polypeptide reads, in one-letter code: Aspartate 1-decarboxylase (127 aa).

Residue S25 is the Schiff-base intermediate with substrate; via pyruvic acid of the active site. S25 carries the post-translational modification Pyruvic acid (Ser). T57 is a substrate binding site. Residue Y58 is the Proton donor of the active site. 73–75 is a binding site for substrate; it reads GAA.

This sequence belongs to the PanD family. Heterooctamer of four alpha and four beta subunits. The cofactor is pyruvate. Is synthesized initially as an inactive proenzyme, which is activated by self-cleavage at a specific serine bond to produce a beta-subunit with a hydroxyl group at its C-terminus and an alpha-subunit with a pyruvoyl group at its N-terminus.

It localises to the cytoplasm. It carries out the reaction L-aspartate + H(+) = beta-alanine + CO2. The protein operates within cofactor biosynthesis; (R)-pantothenate biosynthesis; beta-alanine from L-aspartate: step 1/1. Functionally, catalyzes the pyruvoyl-dependent decarboxylation of aspartate to produce beta-alanine. This is Aspartate 1-decarboxylase from Staphylococcus aureus (strain bovine RF122 / ET3-1).